We begin with the raw amino-acid sequence, 593 residues long: Arginine--tRNA ligase (593 aa).

A 'HIGH' region motif is present at residues 123-133 (PNVAKPMHVGH).

It belongs to the class-I aminoacyl-tRNA synthetase family. Monomer.

It is found in the cytoplasm. It carries out the reaction tRNA(Arg) + L-arginine + ATP = L-arginyl-tRNA(Arg) + AMP + diphosphate. The chain is Arginine--tRNA ligase from Phenylobacterium zucineum (strain HLK1).